The sequence spans 167 residues: MAPIKRGDRFPTTDDVYYIPPEGGEPGPLELSKFVKTKKFVVVSVPGAFTPPCTEQHLPGYIKNLPRILSKGVDFVLVISQNDPFVLKGWKKELGAADAKKLVFVSDPNLKLTKKLGSTIDLSAIGLGTRSGRLALIVNRSGIVEYAAIENGGEVDVSTAQKIIAKL.

Residues 4 to 167 (IKRGDRFPTT…STAQKIIAKL (164 aa)) form the Thioredoxin domain. C53 (cysteine sulfenic acid (-SOH) intermediate) is an active-site residue. The Microbody targeting signal motif lies at 165 to 167 (AKL).

The protein belongs to the peroxiredoxin family. Prx5 subfamily.

It localises to the peroxisome membrane. It catalyses the reaction a hydroperoxide + [thioredoxin]-dithiol = an alcohol + [thioredoxin]-disulfide + H2O. In terms of biological role, thiol-specific peroxidase that catalyzes the reduction of hydrogen peroxide and organic hydroperoxides to water and alcohols, respectively. Plays a role in cell protection against oxidative stress by detoxifying peroxides and as sensor of hydrogen peroxide-mediated signaling events. This Candida boidinii (Yeast) protein is Putative peroxiredoxin-A (PMPA).